A 151-amino-acid polypeptide reads, in one-letter code: UPF0756 membrane protein HSM_1471 (151 aa).

The next 4 membrane-spanning stretches (helical) occupy residues 1-21 (MSLQ…LGVL), 52-72 (YGVN…IVSG), 81-101 (ALIH…AWFG), and 123-143 (ILGV…AGIL).

The protein belongs to the UPF0756 family.

It localises to the cell membrane. The polypeptide is UPF0756 membrane protein HSM_1471 (Histophilus somni (strain 2336) (Haemophilus somnus)).